The sequence spans 534 residues: CD276 antigen (534 aa).

The signal sequence occupies residues 1 to 28; the sequence is MLRRRGSPGMGVHVGAALGALWFCLTGA. One can recognise an Ig-like V-type 1 domain in the interval 29–139; the sequence is LEVQVPEDPV…GSAAVSLQVA (111 aa). Residues 29 to 466 lie on the Extracellular side of the membrane; that stretch reads LEVQVPEDPV…GQPMTFPPEA (438 aa). Intrachain disulfides connect cysteine 50/cysteine 122, cysteine 165/cysteine 220, cysteine 268/cysteine 340, and cysteine 383/cysteine 438. 6 N-linked (GlcNAc...) asparagine glycosylation sites follow: asparagine 104, asparagine 189, asparagine 215, asparagine 322, asparagine 407, and asparagine 433. The region spanning 145–238 is the Ig-like C2-type 1 domain; sequence PSMTLEPNKD…QDAHSSVTIT (94 aa). The Ig-like V-type 2 domain maps to 243–357; it reads PTGAVEVQVP…GSAAVSLQVA (115 aa). The 94-residue stretch at 363–456 folds into the Ig-like C2-type 2 domain; that stretch reads PSMTLEPNKD…QDAHGSVTIT (94 aa). A helical membrane pass occupies residues 467 to 487; the sequence is LWVTVGLSVCLIALLVALAFV. Residues 488 to 534 lie on the Cytoplasmic side of the membrane; it reads CWRKIKQSCEEENAGAEDQDGEGEGSKTALQPLKHSDSKEDDGQEIA. Residues 498-510 are compositionally biased toward acidic residues; it reads EENAGAEDQDGEG. The disordered stretch occupies residues 498 to 534; the sequence is EENAGAEDQDGEGEGSKTALQPLKHSDSKEDDGQEIA. The residue at position 525 (serine 525) is a Phosphoserine.

The protein belongs to the immunoglobulin superfamily. BTN/MOG family. As to quaternary structure, interacts with TREML2 and this interaction enhances T-cell activation. In terms of tissue distribution, ubiquitous but not detectable in peripheral blood lymphocytes or granulocytes. Weakly expressed in resting monocytes. Expressed in dendritic cells derived from monocytes. Expressed in epithelial cells of sinonasal tissue. Expressed in extravillous trophoblast cells and Hofbauer cells of the first trimester placenta and term placenta.

The protein localises to the membrane. In terms of biological role, may participate in the regulation of T-cell-mediated immune response. May play a protective role in tumor cells by inhibiting natural-killer mediated cell lysis as well as a role of marker for detection of neuroblastoma cells. May be involved in the development of acute and chronic transplant rejection and in the regulation of lymphocytic activity at mucosal surfaces. Could also play a key role in providing the placenta and fetus with a suitable immunological environment throughout pregnancy. Both isoform 1 and isoform 2 appear to be redundant in their ability to modulate CD4 T-cell responses. Isoform 2 is shown to enhance the induction of cytotoxic T-cells and selectively stimulates interferon gamma production in the presence of T-cell receptor signaling. The sequence is that of CD276 antigen (CD276) from Homo sapiens (Human).